Reading from the N-terminus, the 594-residue chain is Laccase-2 (594 aa).

The first 20 residues, 1–20 (MGGIIKLSFLFCSLISLVNS), serve as a signal peptide directing secretion. The N-linked (GlcNAc...) asparagine glycan is linked to Asn-67. Plastocyanin-like domains are found at residues 70-183 (EALA…HSPN) and 195-357 (DRIV…RYTG). Residues His-117 and His-119 each coordinate Cu cation. N-linked (GlcNAc...) asparagine glycosylation occurs at Asn-124. Cys-138 and Cys-578 form a disulfide bridge. His-162 and His-164 together coordinate Cu cation. N-linked (GlcNAc...) asparagine glycans are attached at residues Asn-242, Asn-286, Asn-320, Asn-358, Asn-397, Asn-430, Asn-452, and Asn-458. The region spanning 466–563 (PVNIIINNLD…KMAVVVVQPE (98 aa)) is the Plastocyanin-like 3 domain. Positions 480, 483, and 485 each coordinate Cu cation. A glycan (N-linked (GlcNAc...) asparagine) is linked at Asn-508. Cu cation contacts are provided by His-543, Cys-544, His-545, and His-549.

The protein belongs to the multicopper oxidase family. Requires Cu cation as cofactor.

The protein resides in the secreted. Its subcellular location is the cell wall. The enzyme catalyses 4 hydroquinone + O2 = 4 benzosemiquinone + 2 H2O. Its function is as follows. Laccase that catalyzes the oxidation of certain aromatic compounds, including L-dopa, to quinones, which then polymerize to melanin. Able to oxidize a wide variety of aromatic diphenol and diamino groups in the ortho, meta, and para positions but not monophenolic groups such as in phenol, tyramine, or tyrosine. Plays an important role in virulence. Plays a role in dissemination to extrapulmonary sites but is not involved in pulmonary growth or in elicitation of cellular immune responses in the lung. This chain is Laccase-2 (LAC2), found in Cryptococcus neoformans var. grubii serotype A (strain H99 / ATCC 208821 / CBS 10515 / FGSC 9487) (Filobasidiella neoformans var. grubii).